We begin with the raw amino-acid sequence, 861 residues long: Cone cGMP-specific 3',5'-cyclic phosphodiesterase subunit alpha' (861 aa).

GAF domains follow at residues serine 75–leucine 224 and aspartate 256–leucine 433. Residues serine 97, asparagine 116, aspartate 169–threonine 172, and threonine 176 each bind 3',5'-cyclic GMP. Positions glutamate 486–tyrosine 819 constitute a PDEase domain. Histidine 562 acts as the Proton donor in catalysis. A divalent metal cation-binding residues include histidine 566, histidine 602, aspartate 603, and aspartate 723. A compositionally biased stretch (basic and acidic residues) spans threonine 826–aspartate 839. The segment at threonine 826–leucine 861 is disordered. Cysteine 858 bears the Cysteine methyl ester mark. Cysteine 858 carries S-geranylgeranyl cysteine lipidation. A propeptide spans leucine 859 to leucine 861 (removed in mature form).

The protein belongs to the cyclic nucleotide phosphodiesterase family. In terms of assembly, composed of two alpha' subunits that are associated with 3 smaller proteins of 11, 13, and 15 kDa. The cofactor is a divalent metal cation.

The protein localises to the cell membrane. It carries out the reaction 3',5'-cyclic GMP + H2O = GMP + H(+). Its function is as follows. As cone-specific cGMP phosphodiesterase, it plays an essential role in light detection and cone phototransduction by rapidly decreasing intracellular levels of cGMP. The chain is Cone cGMP-specific 3',5'-cyclic phosphodiesterase subunit alpha' (Pde6c) from Mus musculus (Mouse).